We begin with the raw amino-acid sequence, 214 residues long: Probable transaldolase (214 aa).

Lysine 83 (schiff-base intermediate with substrate) is an active-site residue.

The protein belongs to the transaldolase family. Type 3B subfamily.

The protein localises to the cytoplasm. The catalysed reaction is D-sedoheptulose 7-phosphate + D-glyceraldehyde 3-phosphate = D-erythrose 4-phosphate + beta-D-fructose 6-phosphate. The protein operates within carbohydrate degradation; pentose phosphate pathway; D-glyceraldehyde 3-phosphate and beta-D-fructose 6-phosphate from D-ribose 5-phosphate and D-xylulose 5-phosphate (non-oxidative stage): step 2/3. Transaldolase is important for the balance of metabolites in the pentose-phosphate pathway. In Streptococcus equi subsp. zooepidemicus (strain H70), this protein is Probable transaldolase.